The chain runs to 410 residues: Na(+)/H(+) antiporter NhaS4 (410 aa).

A run of 11 helical transmembrane segments spans residues 7-27 (LLIL…GLLF), 33-53 (PPVI…LGLL), 69-89 (FLYL…GLEL), 107-127 (VSIF…LYSL), 135-155 (FIPF…PVLA), 173-193 (LTCA…AIAV), 199-219 (IFGA…MVTL), 241-261 (LLTF…WIGI), 291-311 (FVST…TDLG), 319-339 (WAVC…GVYV), and 376-396 (GVIS…TTII).

The protein belongs to the monovalent cation:proton antiporter 2 (CPA2) transporter (TC 2.A.37) family.

It is found in the membrane. Na(+)/H(+) antiporter. The protein is Na(+)/H(+) antiporter NhaS4 (nhaS4) of Synechocystis sp. (strain ATCC 27184 / PCC 6803 / Kazusa).